The primary structure comprises 270 residues: Urease accessory protein UreD (270 aa).

This sequence belongs to the UreD family. As to quaternary structure, ureD, UreF and UreG form a complex that acts as a GTP-hydrolysis-dependent molecular chaperone, activating the urease apoprotein by helping to assemble the nickel containing metallocenter of UreC. The complex may form in the order UreABCD, UreABCDF, UreABCDFG. The UreE protein probably delivers the nickel in a GTPase-dependent fashion.

Its subcellular location is the cytoplasm. In terms of biological role, necessary for the functional incorporation of the urease nickel metallocenter. The sequence is that of Urease accessory protein UreD from Klebsiella aerogenes (Enterobacter aerogenes).